A 105-amino-acid chain; its full sequence is Pyruvate synthase subunit PorD (105 aa).

4Fe-4S ferredoxin-type domains are found at residues 44-73 (FKPEFNRDKCVRCYLCYIYCPEPAIYLDEE) and 74-103 (GYPVFDYDYCKGCGICANECPTKAIEMVRE). Cys53, Cys56, Cys59, Cys63, Cys83, Cys86, Cys89, and Cys93 together coordinate [4Fe-4S] cluster.

In terms of assembly, heterotetramer of one alpha, one beta, one delta and one gamma chain. Requires [4Fe-4S] cluster as cofactor.

The polypeptide is Pyruvate synthase subunit PorD (porD) (Pyrococcus furiosus (strain ATCC 43587 / DSM 3638 / JCM 8422 / Vc1)).